The chain runs to 121 residues: DNA-directed RNA polymerase subunit omega (121 aa).

A disordered region spans residues 95–121; sequence DGDAANDLQGEEDDLGLGLDEAEDLGF. A compositionally biased stretch (acidic residues) spans 103 to 121; the sequence is QGEEDDLGLGLDEAEDLGF.

The protein belongs to the RNA polymerase subunit omega family. As to quaternary structure, the RNAP catalytic core consists of 2 alpha, 1 beta, 1 beta' and 1 omega subunit. When a sigma factor is associated with the core the holoenzyme is formed, which can initiate transcription.

The catalysed reaction is RNA(n) + a ribonucleoside 5'-triphosphate = RNA(n+1) + diphosphate. Its function is as follows. Promotes RNA polymerase assembly. Latches the N- and C-terminal regions of the beta' subunit thereby facilitating its interaction with the beta and alpha subunits. The polypeptide is DNA-directed RNA polymerase subunit omega (Magnetococcus marinus (strain ATCC BAA-1437 / JCM 17883 / MC-1)).